The chain runs to 154 residues: Bacterial ferritin (154 aa).

The 145-residue stretch at 1 to 145 (MQGNQAVVDY…QQLRLIELIG (145 aa)) folds into the Ferritin-like diiron domain. Residues Glu-18, Glu-51, His-54, Glu-93, Glu-127, and His-130 each contribute to the Fe cation site.

The protein belongs to the bacterioferritin family. In terms of assembly, heterooligomer of 24 subunits, arranged as 12 dimers, that are packed together to form an approximately spherical molecule with a central cavity, in which large amounts of iron can be deposited.

The enzyme catalyses 4 Fe(2+) + O2 + 4 H(+) = 4 Fe(3+) + 2 H2O. It catalyses the reaction Fe(2+)(in) = Fe(2+)(out). In terms of biological role, iron-storage protein, whose ferroxidase center binds Fe(2+), oxidizes it using dioxygen to Fe(3+), and participates in the subsequent Fe(3+) oxide mineral core formation within the central cavity of the BFR protein shell. The protein is Bacterial ferritin (bfrA) of Neisseria meningitidis serogroup A / serotype 4A (strain DSM 15465 / Z2491).